The primary structure comprises 337 residues: DNA-directed RNA polymerase subunit alpha (337 aa).

The alpha N-terminal domain (alpha-NTD) stretch occupies residues 1–233 (MIQKNWQELI…DQLSVFVNFK (233 aa)). The tract at residues 249–337 (FNPALLKKVD…DLAKHYEDQY (89 aa)) is alpha C-terminal domain (alpha-CTD).

Belongs to the RNA polymerase alpha chain family. Homodimer. The RNAP catalytic core consists of 2 alpha, 1 beta, 1 beta' and 1 omega subunit. When a sigma factor is associated with the core the holoenzyme is formed, which can initiate transcription.

The enzyme catalyses RNA(n) + a ribonucleoside 5'-triphosphate = RNA(n+1) + diphosphate. DNA-dependent RNA polymerase catalyzes the transcription of DNA into RNA using the four ribonucleoside triphosphates as substrates. The protein is DNA-directed RNA polymerase subunit alpha of Bartonella bacilliformis (strain ATCC 35685 / KC583 / Herrer 020/F12,63).